We begin with the raw amino-acid sequence, 443 residues long: Signal recognition particle 54 kDa protein (443 aa).

Residues 107–114, 189–193, and 247–250 contribute to the GTP site; these read GVQGSGKT, DTAGR, and TKLD.

The protein belongs to the GTP-binding SRP family. SRP54 subfamily. Part of the signal recognition particle protein translocation system, which is composed of SRP and FtsY. Archaeal SRP consists of a 7S RNA molecule of 300 nucleotides and two protein subunits: SRP54 and SRP19.

Its subcellular location is the cytoplasm. It catalyses the reaction GTP + H2O = GDP + phosphate + H(+). Functionally, involved in targeting and insertion of nascent membrane proteins into the cytoplasmic membrane. Binds to the hydrophobic signal sequence of the ribosome-nascent chain (RNC) as it emerges from the ribosomes. The SRP-RNC complex is then targeted to the cytoplasmic membrane where it interacts with the SRP receptor FtsY. The protein is Signal recognition particle 54 kDa protein of Pyrococcus horikoshii (strain ATCC 700860 / DSM 12428 / JCM 9974 / NBRC 100139 / OT-3).